Consider the following 293-residue polypeptide: Ribosomal protein L11 methyltransferase (293 aa).

S-adenosyl-L-methionine contacts are provided by Thr145, Gly166, Asp188, and Asn230.

Belongs to the methyltransferase superfamily. PrmA family.

The protein resides in the cytoplasm. The catalysed reaction is L-lysyl-[protein] + 3 S-adenosyl-L-methionine = N(6),N(6),N(6)-trimethyl-L-lysyl-[protein] + 3 S-adenosyl-L-homocysteine + 3 H(+). Functionally, methylates ribosomal protein L11. The polypeptide is Ribosomal protein L11 methyltransferase (Salmonella arizonae (strain ATCC BAA-731 / CDC346-86 / RSK2980)).